The chain runs to 299 residues: Bifunctional phosphoglucose/phosphomannose isomerase (299 aa).

An SIS domain is found at 27 to 177; that stretch reads DEVEITPSSR…IHKLMEDFQK (151 aa). Positions 44, 45, 84, 86, 89, and 132 each coordinate D-fructose 6-phosphate. Glutamate 200 serves as the catalytic Proton acceptor. D-fructose 6-phosphate-binding residues include histidine 216 and lysine 295. Catalysis depends on histidine 216, which acts as the Proton donor. Lysine 295 (proton acceptor) is an active-site residue.

This sequence belongs to the PGI/PMI family. As to quaternary structure, homodimer.

It carries out the reaction alpha-D-glucose 6-phosphate = beta-D-fructose 6-phosphate. The catalysed reaction is D-mannose 6-phosphate = D-fructose 6-phosphate. Its activity is regulated as follows. Presence or absence of metal ions or EDTA does not significantly affect the phosphoglucose isomerase activity. Its function is as follows. Dual specificity isomerase that catalyzes the isomerization of both glucose-6-phosphate and mannose-6-phosphate to fructose-6-phosphate with nearly similar catalytic efficiency. Also catalyzes the epimerization of mannose 6-phosphate to glucose 6-phosphate but the rate of epimerization reaction is 20-fold lower than that of isomerization reaction. The protein is Bifunctional phosphoglucose/phosphomannose isomerase of Pyrobaculum calidifontis (strain DSM 21063 / JCM 11548 / VA1).